The sequence spans 561 residues: Oxygen-dependent choline dehydrogenase (561 aa).

6–35 (DYIIIGAGSAGNVLATRLTEDADVSVLLLE) contributes to the FAD binding site. H475 functions as the Proton acceptor in the catalytic mechanism.

The protein belongs to the GMC oxidoreductase family. The cofactor is FAD.

It catalyses the reaction choline + A = betaine aldehyde + AH2. It carries out the reaction betaine aldehyde + NAD(+) + H2O = glycine betaine + NADH + 2 H(+). It functions in the pathway amine and polyamine biosynthesis; betaine biosynthesis via choline pathway; betaine aldehyde from choline (cytochrome c reductase route): step 1/1. Functionally, involved in the biosynthesis of the osmoprotectant glycine betaine. Catalyzes the oxidation of choline to betaine aldehyde and betaine aldehyde to glycine betaine at the same rate. The chain is Oxygen-dependent choline dehydrogenase from Pseudomonas aeruginosa (strain LESB58).